A 337-amino-acid polypeptide reads, in one-letter code: Ketol-acid reductoisomerase (NADP(+)) (337 aa).

Residues 3-183 (VEMFYDDDAD…GGTRAGVIKT (181 aa)) enclose the KARI N-terminal Rossmann domain. NADP(+) contacts are provided by residues 26–29 (YGSQ), Lys49, Ser52, Ser54, and 84–87 (DTAQ). Residue His109 is part of the active site. Gly135 lines the NADP(+) pocket. The 146-residue stretch at 184 to 329 (TFKEETETDL…KKLRDLMSWV (146 aa)) folds into the KARI C-terminal knotted domain. Positions 192, 196, 228, and 232 each coordinate Mg(2+). Ser253 lines the substrate pocket.

This sequence belongs to the ketol-acid reductoisomerase family. Mg(2+) serves as cofactor.

It carries out the reaction (2R)-2,3-dihydroxy-3-methylbutanoate + NADP(+) = (2S)-2-acetolactate + NADPH + H(+). It catalyses the reaction (2R,3R)-2,3-dihydroxy-3-methylpentanoate + NADP(+) = (S)-2-ethyl-2-hydroxy-3-oxobutanoate + NADPH + H(+). It participates in amino-acid biosynthesis; L-isoleucine biosynthesis; L-isoleucine from 2-oxobutanoate: step 2/4. The protein operates within amino-acid biosynthesis; L-valine biosynthesis; L-valine from pyruvate: step 2/4. In terms of biological role, involved in the biosynthesis of branched-chain amino acids (BCAA). Catalyzes an alkyl-migration followed by a ketol-acid reduction of (S)-2-acetolactate (S2AL) to yield (R)-2,3-dihydroxy-isovalerate. In the isomerase reaction, S2AL is rearranged via a Mg-dependent methyl migration to produce 3-hydroxy-3-methyl-2-ketobutyrate (HMKB). In the reductase reaction, this 2-ketoacid undergoes a metal-dependent reduction by NADPH to yield (R)-2,3-dihydroxy-isovalerate. The protein is Ketol-acid reductoisomerase (NADP(+)) of Rhodococcus erythropolis (strain PR4 / NBRC 100887).